Consider the following 476-residue polypeptide: Doublesex- and mab-3-related transcription factor 3 (476 aa).

A DNA-binding region (DM) is located at residues 29–76; the sequence is CARCRNHGVLSWLKGHKRYCRFKDCTCEKCILIIERQRVMAAQVALRR. 2 disordered regions span residues 89-130 and 147-195; these read DSLR…RPTA and GTLP…SKNC. Over residues 102–121 the composition is skewed to low complexity; it reads DAAATAATASQSSPASQASQ. Residues 165–174 show a composition bias toward polar residues; it reads DSSSTDNTAE. Over residues 176 to 185 the composition is skewed to basic and acidic residues; it reads FSDKDTDQRS. The DMA domain occupies 255–290; that stretch reads RPPLEVLKKIFPNQKPTVLELILKGCGGDLVSAVEV. The segment covering 418-432 has biased composition (polar residues); the sequence is NSTSVFRSSPVLSSR. Residues 418–476 form a disordered region; the sequence is NSTSVFRSSPVLSSRTTEDPRISIPDDGCPIVTKQSIYTEDDYDERSDSSDSRILNTSS.

It belongs to the DMRT family. As to expression, expressed in the ventral spinal cord, in a restrical population of neurons migrating ventrically in the developing spinal cord at 11.5 dpc.

The protein resides in the nucleus. Probable transcription factor that plays a role in configuring the spinal circuits controlling stride in vertebrates. Involved in neuronal specification within specific subdivision of spinal cord neurons and in the development of a coordinated locomotor network controlling limb movements. May regulate transcription during sexual development. This is Doublesex- and mab-3-related transcription factor 3 (Dmrt3) from Mus musculus (Mouse).